The following is a 317-amino-acid chain: Ribosomal protein L11 methyltransferase (317 aa).

Positions 158, 179, 201, and 244 each coordinate S-adenosyl-L-methionine.

The protein belongs to the methyltransferase superfamily. PrmA family.

It is found in the cytoplasm. It carries out the reaction L-lysyl-[protein] + 3 S-adenosyl-L-methionine = N(6),N(6),N(6)-trimethyl-L-lysyl-[protein] + 3 S-adenosyl-L-homocysteine + 3 H(+). Its function is as follows. Methylates ribosomal protein L11. The chain is Ribosomal protein L11 methyltransferase from Streptococcus equi subsp. zooepidemicus (strain H70).